Consider the following 347-residue polypeptide: D-fructose 1,6-bisphosphatase class 2/sedoheptulose 1,7-bisphosphatase (347 aa).

Aspartate 33, glutamate 57, aspartate 97, and glutamate 100 together coordinate Mn(2+). Substrate is bound by residues 100-102 (EGT), tyrosine 131, 176-178 (RDR), and 198-200 (DGD). Glutamate 225 is a Mn(2+) binding site.

The protein belongs to the FBPase class 2 family. As to quaternary structure, homotetramer. The cofactor is Mn(2+).

It carries out the reaction beta-D-fructose 1,6-bisphosphate + H2O = beta-D-fructose 6-phosphate + phosphate. The enzyme catalyses D-sedoheptulose 1,7-bisphosphate + H2O = D-sedoheptulose 7-phosphate + phosphate. The protein operates within carbohydrate biosynthesis; Calvin cycle. Its function is as follows. Catalyzes the hydrolysis of fructose 1,6-bisphosphate (Fru 1,6-P2) and sedoheptulose 1,7-bisphosphate (Sed 1,7-P2) to fructose 6-phosphate and sedoheptulose 7-phosphate, respectively. This chain is D-fructose 1,6-bisphosphatase class 2/sedoheptulose 1,7-bisphosphatase, found in Thermosynechococcus vestitus (strain NIES-2133 / IAM M-273 / BP-1).